Consider the following 330-residue polypeptide: Transcription factor TGA2 (330 aa).

The tract at residues 1-48 (MADTSPRTDVSTDDDTDHPDLGSEGALVNTAASDSSDRSKGKMDQKTL) is disordered. The span at 35–47 (SSDRSKGKMDQKT) shows a compositional bias: basic and acidic residues. The bZIP domain occupies 44 to 107 (DQKTLRRLAQ…GTGDQAHSTG (64 aa)). Coiled-coil stretches lie at residues 45 to 142 (QKTL…HAGD) and 217 to 244 (INNL…SLAD). The basic motif stretch occupies residues 46–66 (KTLRRLAQNREAARKSRLRKK). Positions 72–86 (LENSRLKLTQLEQEL) are leucine-zipper. The DOG1 domain maps to 111 to 327 (ALAFDAEHSR…RALSSLWLAR (217 aa)).

This sequence belongs to the bZIP family. Binds DNA as a dimer. Interacts with NPR1, NPR3 and NPR4. Interacts with GRXC7/ROXY1 and GRXC9/GRX480. In terms of tissue distribution, expressed in the whole plant.

The protein localises to the nucleus. Its function is as follows. Transcriptional activator that binds specifically to the DNA sequence 5'-TGACG-3'. Recognizes ocs elements like the as-1 motif of the cauliflower mosaic virus 35S promoter. Binding to the as-1-like cis elements mediate auxin- and salicylic acid-inducible transcription. Required to induce the systemic acquired resistance (SAR) via the regulation of pathogenesis-related genes expression. Binding to the as-1 element of PR-1 promoter is salicylic acid-inducible and mediated by NPR1. Could also bind to the C-boxes (5'-ATGACGTCAT-3') with high affinity. The polypeptide is Transcription factor TGA2 (TGA2) (Arabidopsis thaliana (Mouse-ear cress)).